Consider the following 344-residue polypeptide: L-rhamnose-proton symporter (344 aa).

10 helical membrane-spanning segments follow: residues 4–24 (AITM…CFYA), 38–58 (WSVG…ALLL), 68–88 (FSLS…IGNI), 101–121 (MGIG…TPII), 137–157 (TLLG…AGQL), 175–195 (LVLA…MNAA), 214–234 (LPSY…FCFI), 259–279 (VLLS…YAWG), 290–310 (ISWM…GLVL), and 323–343 (VLSL…MGMA).

The protein belongs to the L-rhamnose transporter (TC 2.A.7.6) family.

The protein resides in the cell inner membrane. The catalysed reaction is L-rhamnopyranose(in) + H(+)(in) = L-rhamnopyranose(out) + H(+)(out). Functionally, uptake of L-rhamnose across the cytoplasmic membrane with the concomitant transport of protons into the cell (symport system). The chain is L-rhamnose-proton symporter from Escherichia coli O157:H7.